The primary structure comprises 386 residues: HORMA domain-containing protein 1 (386 aa).

The 201-residue stretch at 24–224 (TQSLILVKRL…TPFHVLKVKV (201 aa)) folds into the HORMA domain. 2 disordered regions span residues 237–274 (SIFKKQASKQPQTDEEKPDLSINDDLAQDNNGDRKRDD) and 289–386 (EDGN…TPLN). Positions 289 to 313 (EDGNLQSDDSQNSALADSQEKTSQA) are enriched in polar residues. Basic and acidic residues predominate over residues 329 to 343 (QKPDLELKNQKESAR).

The protein localises to the nucleus. Its subcellular location is the chromosome. In terms of biological role, plays a key role in meiotic progression by ensuring that sufficient numbers of processed DNA double-strand breaks (DSBs) are available for successful homology search, promoting synaptonemal-complex formation independently and playing key role in the male mid-pachytene checkpoint and the female meiotic prophase checkpoint. This chain is HORMA domain-containing protein 1 (hormad1), found in Xenopus laevis (African clawed frog).